Here is a 123-residue protein sequence, read N- to C-terminus: Small ribosomal subunit protein uS13 (123 aa).

The tract at residues 95–123 (GLPVRGQRTKTNARTRKGPIKTVGAKRKK) is disordered.

This sequence belongs to the universal ribosomal protein uS13 family. In terms of assembly, part of the 30S ribosomal subunit. Forms a loose heterodimer with protein S19. Forms two bridges to the 50S subunit in the 70S ribosome.

Its function is as follows. Located at the top of the head of the 30S subunit, it contacts several helices of the 16S rRNA. In the 70S ribosome it contacts the 23S rRNA (bridge B1a) and protein L5 of the 50S subunit (bridge B1b), connecting the 2 subunits; these bridges are implicated in subunit movement. Contacts the tRNAs in the A and P-sites. This Desulfitobacterium hafniense (strain DSM 10664 / DCB-2) protein is Small ribosomal subunit protein uS13.